A 187-amino-acid chain; its full sequence is MLEVLPADVAELVEQGGVIAYPTEAVYGLGCDPDNDDAIERLLEIKLRPWQKGLILVAGDYQQLLPYIDESQLSAEQLAFVHSKWPGPFTFIMPVKPGLSNLLSGSFDSIAVRVTAHEGVKALCAAINKPIVSTSANLTGQDPALSGAAVKQQFEGIIAGLVIGDLGIQASPSTIIDAKSGQVIRKG.

In terms of domain architecture, YrdC-like spans 3–187 (EVLPADVAEL…AKSGQVIRKG (185 aa)).

It belongs to the SUA5 family. TsaC subfamily.

The protein localises to the cytoplasm. The enzyme catalyses L-threonine + hydrogencarbonate + ATP = L-threonylcarbamoyladenylate + diphosphate + H2O. Its function is as follows. Required for the formation of a threonylcarbamoyl group on adenosine at position 37 (t(6)A37) in tRNAs that read codons beginning with adenine. Catalyzes the conversion of L-threonine, HCO(3)(-)/CO(2) and ATP to give threonylcarbamoyl-AMP (TC-AMP) as the acyladenylate intermediate, with the release of diphosphate. The sequence is that of Threonylcarbamoyl-AMP synthase from Shewanella halifaxensis (strain HAW-EB4).